The primary structure comprises 527 residues: Catalase (527 aa).

Basic and acidic residues predominate over residues 1 to 22 (MADNRDPASDQMKHWKEQRAAQ). Positions 1–32 (MADNRDPASDQMKHWKEQRAAQKPDILTTGSG) are disordered. Alanine 2 carries the post-translational modification N-acetylalanine. A Phosphoserine modification is found at serine 9. Lysine 13 is modified (N6-succinyllysine). Catalysis depends on residues histidine 75 and asparagine 148. NADP(+) contacts are provided by histidine 194, serine 201, arginine 203, and asparagine 213. Lysine 221 is modified (N6-succinyllysine). Lysine 233 carries the post-translational modification N6-acetyllysine. Residues lysine 237, tryptophan 303, and histidine 305 each contribute to the NADP(+) site. Position 358 (tyrosine 358) interacts with heme. Residues serine 417 and serine 434 each carry the phosphoserine modification. Lysine 480 carries the N6-acetyllysine; alternate modification. Lysine 480 carries the N6-succinyllysine; alternate modification. Lysine 499 is modified (N6-acetyllysine). Threonine 511 carries the phosphothreonine modification. Residue serine 517 is modified to Phosphoserine. Residues 524-527 (KANL) carry the Microbody targeting signal; atypical motif.

It belongs to the catalase family. In terms of assembly, homotetramer. Interacts (via microbody targeting signal) with PEX5, monomeric form interacts with PEX5, leading to its translocation into peroxisomes. The cofactor is heme. It depends on NADP(+) as a cofactor.

It is found in the peroxisome matrix. The enzyme catalyses 2 H2O2 = O2 + 2 H2O. Functionally, catalyzes the degradation of hydrogen peroxide (H(2)O(2)) generated by peroxisomal oxidases to water and oxygen, thereby protecting cells from the toxic effects of hydrogen peroxide. Promotes growth of cells including T-cells, B-cells, myeloid leukemia cells, melanoma cells, mastocytoma cells and normal and transformed fibroblast cells. This chain is Catalase (CAT), found in Sus scrofa (Pig).